The primary structure comprises 127 residues: Fluoride-specific ion channel FluC (127 aa).

The next 2 helical transmembrane spans lie at 4 to 24 (WFWIGLGGAAGTLARYGLSTW) and 36 to 56 (GTLAVNVIGSFLLGAIGEIAA). Residues Gly-75 and Thr-78 each coordinate Na(+). Residues 100–120 (LANIAITLVVCLLAGVLGMVV) form a helical membrane-spanning segment.

The protein belongs to the fluoride channel Fluc/FEX (TC 1.A.43) family.

The protein resides in the cell inner membrane. The enzyme catalyses fluoride(in) = fluoride(out). With respect to regulation, na(+) is not transported, but it plays an essential structural role and its presence is essential for fluoride channel function. Functionally, fluoride-specific ion channel. Important for reducing fluoride concentration in the cell, thus reducing its toxicity. The chain is Fluoride-specific ion channel FluC from Sorangium cellulosum (strain So ce56) (Polyangium cellulosum (strain So ce56)).